A 132-amino-acid polypeptide reads, in one-letter code: Mite allergen Der p 5 (132 aa).

Immunodominant conformational IgE-binding epitope regions lie at residues 25–53 and 102–132; these read DYQN…FYLQ and EQYN…KIEV.

It belongs to the mite group 5 allergen family. Monomer. Trimer of homodimers. Oligomerizes in a concentration-dependent manner.

The chain is Mite allergen Der p 5 (DERP5) from Dermatophagoides pteronyssinus (European house dust mite).